The following is a 409-amino-acid chain: Galactosylgalactosylxylosylprotein 3-beta-glucuronosyltransferase S (409 aa).

A disordered region spans residues 1–45 (MSSARLLESQTSDEDNEDIERRPHQSHSRSCSNNTTPTHPPHPMV). Residues 1–53 (MSSARLLESQTSDEDNEDIERRPHQSHSRSCSNNTTPTHPPHPMVRKGGVARR) lie on the Cytoplasmic side of the membrane. A Phosphoserine modification is found at S9. T11 bears the Phosphothreonine mark. Phosphoserine occurs at positions 12 and 32. Residues 54–73 (ICLIGGALFLLLVALCYLTL) form a helical; Signal-anchor for type II membrane protein membrane-spanning segment. Residues 74–409 (SGDTRLGGSE…RENPHSKILS (336 aa)) are Lumenal-facing. Residues N102 and N223 are each glycosylated (N-linked (GlcNAc...) asparagine). A Mn(2+)-binding site is contributed by D235. The active-site Proton acceptor is E318. An N-linked (GlcNAc...) asparagine glycan is attached at N338. Positions 389–409 (EGRNALISKNGRENPHSKILS) are disordered. The segment covering 398-409 (NGRENPHSKILS) has biased composition (basic and acidic residues).

Belongs to the glycosyltransferase 43 family. It depends on Mn(2+) as a cofactor.

It localises to the golgi apparatus membrane. It catalyses the reaction 3-O-(beta-D-galactosyl-(1-&gt;3)-beta-D-galactosyl-(1-&gt;4)-beta-D-xylosyl)-L-seryl-[protein] + UDP-alpha-D-glucuronate = 3-O-(beta-D-GlcA-(1-&gt;3)-beta-D-Gal-(1-&gt;3)-beta-D-Gal-(1-&gt;4)-beta-D-Xyl)-L-seryl-[protein] + UDP + H(+). Its pathway is protein modification; protein glycosylation. In terms of biological role, involved in the biosynthesis of L2/HNK-1 carbohydrate epitope on both glycolipids and glycoproteins. Enzyme has a broad specificity. The chain is Galactosylgalactosylxylosylprotein 3-beta-glucuronosyltransferase S (GlcAT-S) from Drosophila melanogaster (Fruit fly).